Here is a 1036-residue protein sequence, read N- to C-terminus: Isoleucine--tRNA ligase (1036 aa).

A 'HIGH' region motif is present at residues 48 to 58; that stretch reads PTANGKPHVGH. Residues 590-594 carry the 'KMSKS' region motif; sequence KMSKS. Lysine 593 lines the ATP pocket.

It belongs to the class-I aminoacyl-tRNA synthetase family. IleS type 2 subfamily. Monomer. Requires Zn(2+) as cofactor.

Its subcellular location is the cytoplasm. The enzyme catalyses tRNA(Ile) + L-isoleucine + ATP = L-isoleucyl-tRNA(Ile) + AMP + diphosphate. Catalyzes the attachment of isoleucine to tRNA(Ile). As IleRS can inadvertently accommodate and process structurally similar amino acids such as valine, to avoid such errors it has two additional distinct tRNA(Ile)-dependent editing activities. One activity is designated as 'pretransfer' editing and involves the hydrolysis of activated Val-AMP. The other activity is designated 'posttransfer' editing and involves deacylation of mischarged Val-tRNA(Ile). The polypeptide is Isoleucine--tRNA ligase (Clostridium tetani (strain Massachusetts / E88)).